The chain runs to 347 residues: Quinolinate synthase (347 aa).

Iminosuccinate contacts are provided by H47 and S68. C113 is a binding site for [4Fe-4S] cluster. Iminosuccinate is bound by residues Y139–N141 and S156. [4Fe-4S] cluster is bound at residue C200. Residues H226–E228 and T243 each bind iminosuccinate. C297 contacts [4Fe-4S] cluster.

It belongs to the quinolinate synthase family. Type 1 subfamily. Requires [4Fe-4S] cluster as cofactor.

It is found in the cytoplasm. It carries out the reaction iminosuccinate + dihydroxyacetone phosphate = quinolinate + phosphate + 2 H2O + H(+). It functions in the pathway cofactor biosynthesis; NAD(+) biosynthesis; quinolinate from iminoaspartate: step 1/1. Its function is as follows. Catalyzes the condensation of iminoaspartate with dihydroxyacetone phosphate to form quinolinate. The sequence is that of Quinolinate synthase from Salmonella gallinarum (strain 287/91 / NCTC 13346).